We begin with the raw amino-acid sequence, 58 residues long: Small ribosomal subunit protein bS21 (58 aa).

Residues 36 to 58 (EFYEKPSVKRKRKSEAARKRKKF) are disordered. A compositionally biased stretch (basic residues) spans 43–58 (VKRKRKSEAARKRKKF).

Belongs to the bacterial ribosomal protein bS21 family.

The chain is Small ribosomal subunit protein bS21 from Streptococcus uberis (strain ATCC BAA-854 / 0140J).